A 274-amino-acid chain; its full sequence is Large ribosomal subunit protein uL2 (274 aa).

A disordered region spans residues Gly-222–Gly-274. Residues Asp-229 to Gly-239 are compositionally biased toward basic and acidic residues.

It belongs to the universal ribosomal protein uL2 family. Part of the 50S ribosomal subunit. Forms a bridge to the 30S subunit in the 70S ribosome.

Functionally, one of the primary rRNA binding proteins. Required for association of the 30S and 50S subunits to form the 70S ribosome, for tRNA binding and peptide bond formation. It has been suggested to have peptidyltransferase activity; this is somewhat controversial. Makes several contacts with the 16S rRNA in the 70S ribosome. The protein is Large ribosomal subunit protein uL2 of Thermosipho africanus (strain TCF52B).